A 420-amino-acid chain; its full sequence is Glutamyl-tRNA reductase (420 aa).

Substrate is bound by residues Thr-49 to Arg-52, Ser-107, Glu-112 to Gln-114, and Gln-118. Residue Cys-50 is the Nucleophile of the active site. Gly-187 to Ile-192 provides a ligand contact to NADP(+).

This sequence belongs to the glutamyl-tRNA reductase family. Homodimer.

It catalyses the reaction (S)-4-amino-5-oxopentanoate + tRNA(Glu) + NADP(+) = L-glutamyl-tRNA(Glu) + NADPH + H(+). The protein operates within porphyrin-containing compound metabolism; protoporphyrin-IX biosynthesis; 5-aminolevulinate from L-glutamyl-tRNA(Glu): step 1/2. Catalyzes the NADPH-dependent reduction of glutamyl-tRNA(Glu) to glutamate 1-semialdehyde (GSA). In Photobacterium profundum (strain SS9), this protein is Glutamyl-tRNA reductase.